The sequence spans 191 residues: Protein YceI (191 aa).

Residues 1–22 (MKKNLLGFTFASLLFTTGSAVA) form the signal peptide.

The protein belongs to the UPF0312 family. Type 1 subfamily.

It localises to the periplasm. The protein is Protein YceI of Salmonella agona (strain SL483).